Consider the following 301-residue polypeptide: Methionyl-tRNA formyltransferase (301 aa).

Residue 109-112 (SLLP) coordinates (6S)-5,6,7,8-tetrahydrofolate.

Belongs to the Fmt family.

The enzyme catalyses L-methionyl-tRNA(fMet) + (6R)-10-formyltetrahydrofolate = N-formyl-L-methionyl-tRNA(fMet) + (6S)-5,6,7,8-tetrahydrofolate + H(+). In terms of biological role, attaches a formyl group to the free amino group of methionyl-tRNA(fMet). The formyl group appears to play a dual role in the initiator identity of N-formylmethionyl-tRNA by promoting its recognition by IF2 and preventing the misappropriation of this tRNA by the elongation apparatus. The sequence is that of Methionyl-tRNA formyltransferase from Anaplasma marginale (strain St. Maries).